Consider the following 468-residue polypeptide: ATP synthase subunit beta (468 aa).

ATP is bound at residue 148-155 (GGAGVGKT).

Belongs to the ATPase alpha/beta chains family. As to quaternary structure, F-type ATPases have 2 components, CF(1) - the catalytic core - and CF(0) - the membrane proton channel. CF(1) has five subunits: alpha(3), beta(3), gamma(1), delta(1), epsilon(1). CF(0) has three main subunits: a(1), b(2) and c(9-12). The alpha and beta chains form an alternating ring which encloses part of the gamma chain. CF(1) is attached to CF(0) by a central stalk formed by the gamma and epsilon chains, while a peripheral stalk is formed by the delta and b chains.

It is found in the cell membrane. It carries out the reaction ATP + H2O + 4 H(+)(in) = ADP + phosphate + 5 H(+)(out). Functionally, produces ATP from ADP in the presence of a proton gradient across the membrane. The catalytic sites are hosted primarily by the beta subunits. This is ATP synthase subunit beta from Stenotrophomonas maltophilia (strain K279a).